Here is a 331-residue protein sequence, read N- to C-terminus: NADH-quinone oxidoreductase subunit H (331 aa).

Helical transmembrane passes span 5–25, 45–65, 78–98, 122–142, 156–176, 192–212, 245–265, 271–291, and 311–331; these read LFFV…MASL, GPDM…IKLF, FIFL…LAPV, VLYI…AGLA, VVAL…VVMV, IFNW…MASF, FFIG…LLFL, FLFI…FFFF, and WKIL…ALLI.

Belongs to the complex I subunit 1 family. NDH-1 is composed of 14 different subunits. Subunits NuoA, H, J, K, L, M, N constitute the membrane sector of the complex.

It localises to the cell inner membrane. It carries out the reaction a quinone + NADH + 5 H(+)(in) = a quinol + NAD(+) + 4 H(+)(out). In terms of biological role, NDH-1 shuttles electrons from NADH, via FMN and iron-sulfur (Fe-S) centers, to quinones in the respiratory chain. The immediate electron acceptor for the enzyme in this species is believed to be ubiquinone. Couples the redox reaction to proton translocation (for every two electrons transferred, four hydrogen ions are translocated across the cytoplasmic membrane), and thus conserves the redox energy in a proton gradient. This subunit may bind ubiquinone. This Campylobacter concisus (strain 13826) protein is NADH-quinone oxidoreductase subunit H.